Here is a 507-residue protein sequence, read N- to C-terminus: Tyrosine protein-kinase src-2 (507 aa).

Over residues 1-10 (MGSCIGKEDP) the composition is skewed to basic and acidic residues. The interval 1–52 (MGSCIGKEDPPPGATSPVHTSSTLGRESLPSHPRIPSIGPIAASSSGNTIDK) is disordered. Gly-2 carries N-myristoyl glycine lipidation. Over residues 35–47 (IPSIGPIAASSSG) the composition is skewed to low complexity. Residues 57–118 (SQSANFVALF…PSNYVAREKS (62 aa)) form the SH3 domain. An SH2 domain is found at 124-216 (WYFGKMRRID…GLCVNLGAPC (93 aa)). Positions 240-494 (VRLIRQIGAG…LQWKLEDLFN (255 aa)) constitute a Protein kinase domain. Residues 246-254 (IGAGQFGEV) and Lys-268 each bind ATP. Residue Asp-358 is the Proton acceptor of the active site. Tyr-500 carries the post-translational modification Phosphotyrosine.

It belongs to the protein kinase superfamily. Tyr protein kinase family. SRC subfamily. Requires Mg(2+) as cofactor. Mn(2+) serves as cofactor. Post-translationally, may be phosphorylated on Tyr-500 by csk-1. As to expression, expressed in vulva, cells around anus and pharyngeal muscles.

The catalysed reaction is L-tyrosyl-[protein] + ATP = O-phospho-L-tyrosyl-[protein] + ADP + H(+). With respect to regulation, may be inhibited by csk-1-mediated phosphorylation at Tyr-500. Its function is as follows. Non-receptor tyrosine-protein kinase which may play a role in larval and pharynx development. Unlike src-1, does not play a role in embryonic development. This Caenorhabditis elegans protein is Tyrosine protein-kinase src-2.